A 204-amino-acid polypeptide reads, in one-letter code: Ribosome maturation factor RimP (204 aa).

The disordered stretch occupies residues glycine 176 to histidine 204. Residues serine 181–glutamate 198 show a composition bias toward acidic residues.

Belongs to the RimP family.

The protein localises to the cytoplasm. Functionally, required for maturation of 30S ribosomal subunits. This is Ribosome maturation factor RimP from Cereibacter sphaeroides (strain KD131 / KCTC 12085) (Rhodobacter sphaeroides).